The following is a 522-amino-acid chain: Protein tweety homolog 3 (522 aa).

Residues 1–43 (MAAAISYTPPWWVNLLHRLPHLNLQWESLNGDFRPEDPDYQQS) are Extracellular-facing. Residues 44–64 (LMLLACVALSCLALDLLFLLF) form a helical membrane-spanning segment. Residues 65–87 (YSFWFCCRHRKTEENTNADCCCT) are Cytoplasmic-facing. A helical transmembrane segment spans residues 88–108 (VWCVIVATLVCSAGIAVGFYG). Over 109–211 (NGETSDGIHR…VDLFDWYRWL (103 aa)) the chain is Extracellular. Ca(2+) is bound by residues glutamate 111 and aspartate 114. 2 N-linked (GlcNAc...) asparagine glycosylation sites follow: asparagine 127 and asparagine 145. A helical transmembrane segment spans residues 212–232 (GYLGLLLFHVFICLLVLFGLI). The Cytoplasmic portion of the chain corresponds to 233-238 (RNSKGT). A helical transmembrane segment spans residues 239-259 (LICVCFLGMMALIISWASMGL). Topologically, residues 260–386 (ELAVAVGSSD…LTGFCYDGVE (127 aa)) are extracellular. 2 disulfides stabilise this stretch: cysteine 271/cysteine 381 and cysteine 299/cysteine 366. Residue asparagine 351 is glycosylated (N-linked (GlcNAc...) asparagine). The helical transmembrane segment at 387 to 407 (GLIYLVLFSFVTALMFSSIVC) threads the bilayer. The Cytoplasmic portion of the chain corresponds to 408–522 (SVPHTWQQRR…TNRPETDPVH (115 aa)). A disordered region spans residues 483–522 (QNPRCENTPLIGRESPPPSYTSSMRAKYLATNRPETDPVH).

This sequence belongs to the tweety family. In terms of assembly, homotetramer; disulfide-linked. Forms cis-homodimers in the presence of Ca(2+).

It localises to the cell membrane. It catalyses the reaction chloride(in) = chloride(out). It carries out the reaction L-glutamate(out) = L-glutamate(in). May act as a calcium-independent, swelling-dependent volume-regulated anion channel (VRAC-swell) which plays a pivotal role in the process of regulatory volume decrease (RVD) in the brain through the efflux of anions like chloride and organic osmolytes like glutamate. Probable large-conductance Ca(2+)-activated chloride channel. The polypeptide is Protein tweety homolog 3 (ttyh3) (Xenopus laevis (African clawed frog)).